Reading from the N-terminus, the 130-residue chain is Large ribosomal subunit protein bL20c (130 aa).

The protein belongs to the bacterial ribosomal protein bL20 family.

It is found in the plastid. The protein localises to the chloroplast. In terms of biological role, binds directly to 23S ribosomal RNA and is necessary for the in vitro assembly process of the 50S ribosomal subunit. It is not involved in the protein synthesizing functions of that subunit. This chain is Large ribosomal subunit protein bL20c (rpl20), found in Glycine max (Soybean).